We begin with the raw amino-acid sequence, 40 residues long: Photosystem II reaction center protein J (40 aa).

A helical transmembrane segment spans residues 8–28 (IPLWIIGTVAGILVIGLVGIF).

Belongs to the PsbJ family. In terms of assembly, PSII is composed of 1 copy each of membrane proteins PsbA, PsbB, PsbC, PsbD, PsbE, PsbF, PsbH, PsbI, PsbJ, PsbK, PsbL, PsbM, PsbT, PsbX, PsbY, PsbZ, Psb30/Ycf12, at least 3 peripheral proteins of the oxygen-evolving complex and a large number of cofactors. It forms dimeric complexes.

It localises to the plastid. The protein localises to the chloroplast thylakoid membrane. Its function is as follows. One of the components of the core complex of photosystem II (PSII). PSII is a light-driven water:plastoquinone oxidoreductase that uses light energy to abstract electrons from H(2)O, generating O(2) and a proton gradient subsequently used for ATP formation. It consists of a core antenna complex that captures photons, and an electron transfer chain that converts photonic excitation into a charge separation. In Spinacia oleracea (Spinach), this protein is Photosystem II reaction center protein J.